Consider the following 231-residue polypeptide: Lytic polysaccharide monooxygenase-like protein X325 (231 aa).

A signal peptide spans 1–17; that stretch reads MRLSLLVTLALTALIEA. His-18 provides a ligand contact to Cu(2+). Asn-34, Asn-55, Asn-98, Asn-133, Asn-174, and Asn-180 each carry an N-linked (GlcNAc...) asparagine glycan. 2 cysteine pairs are disulfide-bonded: Cys-47–Cys-157 and Cys-122–Cys-178. A lipid anchor (GPI-anchor amidated isoleucine) is attached at Ile-202. Positions 203–231 are cleaved as a propeptide — removed in mature form; sequence ASTTTGSAPRYYSWAGWLPLVAGAIWMAL.

This sequence belongs to the X325 family. It depends on Cu(2+) as a cofactor.

It localises to the cell membrane. In terms of biological role, lytic polysaccharide monooxygenase-like protein that has diverged to biological functions other than polysaccharide degradation since it does not perform oxidative cleavage of polysaccharides. Acts as a cell surface-bound protein that functions in the copper-accumulation pathway. May also act as the major cell wall sensor that regulates MAP kinase-dependent hyphal anastomosis, the fusion of hyphal cells. The polypeptide is Lytic polysaccharide monooxygenase-like protein X325 (Hypocrea jecorina (strain QM6a) (Trichoderma reesei)).